The following is a 182-amino-acid chain: uncharacterized protein (182 aa).

It belongs to the DNA 3' phosphatase family.

This is an uncharacterized protein from Autographa californica nuclear polyhedrosis virus (AcMNPV).